The sequence spans 126 residues: MMIYWIFLGLAIVAEIIGTLSMKYASVSGELTGHIVMYFMITGSYIMLALAVKKVALGVAYALWEGIGILIITVFSVLWFDESLSPLKIAGLVTLVGGIMLVKSGTRKPKKPNSPNRNSGEHHATA.

Helical transmembrane passes span 1–21 (MMIY…GTLS), 32–52 (TGHI…ALAV), 55–75 (VALG…ITVF), and 82–102 (ESLS…IMLV). Positions 104–126 (SGTRKPKKPNSPNRNSGEHHATA) are disordered.

This sequence belongs to the drug/metabolite transporter (DMT) superfamily. Small multidrug resistance (SMR) (TC 2.A.7.1) family. MdtJ subfamily. As to quaternary structure, forms a complex with MdtI.

Its subcellular location is the cell inner membrane. Catalyzes the excretion of spermidine. This Yersinia enterocolitica serotype O:8 / biotype 1B (strain NCTC 13174 / 8081) protein is Spermidine export protein MdtJ.